The sequence spans 634 residues: DNA-directed RNA polymerase subunit gamma (634 aa).

Positions 74, 76, 89, and 92 each coordinate Zn(2+). Mg(2+) is bound by residues Asp-471, Asp-473, and Asp-475.

Belongs to the RNA polymerase beta' chain family. RpoC1 subfamily. In cyanobacteria the RNAP catalytic core is composed of 2 alpha, 1 beta, 1 beta', 1 gamma and 1 omega subunit. When a sigma factor is associated with the core the holoenzyme is formed, which can initiate transcription. Requires Mg(2+) as cofactor. It depends on Zn(2+) as a cofactor.

It carries out the reaction RNA(n) + a ribonucleoside 5'-triphosphate = RNA(n+1) + diphosphate. Functionally, DNA-dependent RNA polymerase catalyzes the transcription of DNA into RNA using the four ribonucleoside triphosphates as substrates. The protein is DNA-directed RNA polymerase subunit gamma of Synechococcus sp. (strain CC9311).